Consider the following 257-residue polypeptide: Zinc transporter ZupT (257 aa).

A run of 8 helical transmembrane segments spans residues 5 to 25 (LILT…GVLG), 33 to 53 (LAFS…MEML), 61 to 81 (GMSP…YFGL), 109 to 129 (AILL…ATFV), 137 to 157 (LGFG…LAVA), 171 to 191 (IFWA…AWLI), 195 to 215 (LVSP…MVAL), and 236 to 256 (GVLC…TIGI). Fe(2+) contacts are provided by Asn-120 and Glu-123. 2 residues coordinate Zn(2+): Glu-123 and His-148. Fe(2+) is bound by residues Asn-149, Glu-152, and Glu-181. A Zn(2+)-binding site is contributed by Glu-152.

It belongs to the ZIP transporter (TC 2.A.5) family. ZupT subfamily.

Its subcellular location is the cell inner membrane. It carries out the reaction Zn(2+)(in) = Zn(2+)(out). Functionally, mediates zinc uptake. May also transport other divalent cations. The polypeptide is Zinc transporter ZupT (Salmonella paratyphi A (strain ATCC 9150 / SARB42)).